A 543-amino-acid chain; its full sequence is CTP synthase (543 aa).

Residues 1–267 are amidoligase domain; the sequence is MTKYVFVTGG…ATQVLNLLNL (267 aa). Ser13 is a binding site for CTP. Residue Ser13 participates in UTP binding. ATP contacts are provided by residues 14–19 and Asp71; that span reads SIGKGI. 2 residues coordinate Mg(2+): Asp71 and Glu141. CTP-binding positions include 148-150, 188-193, and Lys224; these read DIE and KTKPTQ. Residues 188–193 and Lys224 each bind UTP; that span reads KTKPTQ. The Glutamine amidotransferase type-1 domain maps to 292–534; that stretch reads EVAIVGKYVR…LAAAAKNSNR (243 aa). L-glutamine is bound at residue Gly354. The active-site Nucleophile; for glutamine hydrolysis is Cys381. Residues 382–385, Glu405, and Arg462 each bind L-glutamine; that span reads LGMQ. Catalysis depends on residues His507 and Glu509.

It belongs to the CTP synthase family. In terms of assembly, homotetramer.

It carries out the reaction UTP + L-glutamine + ATP + H2O = CTP + L-glutamate + ADP + phosphate + 2 H(+). The enzyme catalyses L-glutamine + H2O = L-glutamate + NH4(+). It catalyses the reaction UTP + NH4(+) + ATP = CTP + ADP + phosphate + 2 H(+). Its pathway is pyrimidine metabolism; CTP biosynthesis via de novo pathway; CTP from UDP: step 2/2. Allosterically activated by GTP, when glutamine is the substrate; GTP has no effect on the reaction when ammonia is the substrate. The allosteric effector GTP functions by stabilizing the protein conformation that binds the tetrahedral intermediate(s) formed during glutamine hydrolysis. Inhibited by the product CTP, via allosteric rather than competitive inhibition. Its function is as follows. Catalyzes the ATP-dependent amination of UTP to CTP with either L-glutamine or ammonia as the source of nitrogen. Regulates intracellular CTP levels through interactions with the four ribonucleotide triphosphates. This is CTP synthase from Thermosynechococcus vestitus (strain NIES-2133 / IAM M-273 / BP-1).